The sequence spans 498 residues: Polyphosphate:AMP phosphotransferase (498 aa).

2 PPK2 regions span residues 11–234 and 269–491; these read IDDD…MQAA and LSKE…LEKA.

Belongs to the polyphosphate kinase 2 (PPK2) family. Class II subfamily.

It catalyses the reaction [phosphate](n) + ADP = [phosphate](n+1) + AMP. Uses inorganic polyphosphate (polyP) as a donor to convert AMP to ADP. Can also convert GMP to GDP, with lower efficiency. The polypeptide is Polyphosphate:AMP phosphotransferase (Pseudomonas syringae pv. tomato (strain ATCC BAA-871 / DC3000)).